The following is a 774-amino-acid chain: Ion-translocating oxidoreductase complex subunit C (774 aa).

2 4Fe-4S ferredoxin-type domains span residues 369–397 (GEPQ…QQLY) and 407–436 (KATT…VQYF). The [4Fe-4S] cluster site is built by cysteine 377, cysteine 380, cysteine 383, cysteine 387, cysteine 416, cysteine 419, cysteine 422, and cysteine 426. The interval 602–750 (KLEQQQANAE…EPEEQIDPRK (149 aa)) is disordered.

This sequence belongs to the 4Fe4S bacterial-type ferredoxin family. RnfC subfamily. The complex is composed of six subunits: RsxA, RsxB, RsxC, RsxD, RsxE and RsxG. Requires [4Fe-4S] cluster as cofactor.

The protein resides in the cell inner membrane. Functionally, part of a membrane-bound complex that couples electron transfer with translocation of ions across the membrane. Required to maintain the reduced state of SoxR. In Escherichia coli O6:K15:H31 (strain 536 / UPEC), this protein is Ion-translocating oxidoreductase complex subunit C.